The chain runs to 342 residues: Large ribosomal subunit protein uL3 (342 aa).

This sequence belongs to the universal ribosomal protein uL3 family. In terms of assembly, part of the 50S ribosomal subunit. Forms a cluster with proteins L14 and L24e.

Functionally, one of the primary rRNA binding proteins, it binds directly near the 3'-end of the 23S rRNA, where it nucleates assembly of the 50S subunit. In Pyrobaculum islandicum (strain DSM 4184 / JCM 9189 / GEO3), this protein is Large ribosomal subunit protein uL3.